The sequence spans 517 residues: Bifunctional purine biosynthesis protein PurH (517 aa).

Residues Met-1–Cys-151 enclose the MGS-like domain.

Belongs to the PurH family.

It carries out the reaction (6R)-10-formyltetrahydrofolate + 5-amino-1-(5-phospho-beta-D-ribosyl)imidazole-4-carboxamide = 5-formamido-1-(5-phospho-D-ribosyl)imidazole-4-carboxamide + (6S)-5,6,7,8-tetrahydrofolate. It catalyses the reaction IMP + H2O = 5-formamido-1-(5-phospho-D-ribosyl)imidazole-4-carboxamide. Its pathway is purine metabolism; IMP biosynthesis via de novo pathway; 5-formamido-1-(5-phospho-D-ribosyl)imidazole-4-carboxamide from 5-amino-1-(5-phospho-D-ribosyl)imidazole-4-carboxamide (10-formyl THF route): step 1/1. The protein operates within purine metabolism; IMP biosynthesis via de novo pathway; IMP from 5-formamido-1-(5-phospho-D-ribosyl)imidazole-4-carboxamide: step 1/1. This Elusimicrobium minutum (strain Pei191) protein is Bifunctional purine biosynthesis protein PurH.